The primary structure comprises 567 residues: DNA ligase (567 aa).

Glu260 is a binding site for ATP. Residue Lys262 is the N6-AMP-lysine intermediate of the active site. ATP-binding residues include Arg267, Arg282, Glu312, Phe352, Arg427, and Lys433.

Belongs to the ATP-dependent DNA ligase family. Requires Mg(2+) as cofactor.

The enzyme catalyses ATP + (deoxyribonucleotide)n-3'-hydroxyl + 5'-phospho-(deoxyribonucleotide)m = (deoxyribonucleotide)n+m + AMP + diphosphate.. Functionally, DNA ligase that seals nicks in double-stranded DNA during DNA replication, DNA recombination and DNA repair. This chain is DNA ligase, found in Methanococcoides burtonii (strain DSM 6242 / NBRC 107633 / OCM 468 / ACE-M).